A 221-amino-acid chain; its full sequence is Octanoyltransferase (221 aa).

One can recognise a BPL/LPL catalytic domain in the interval 36–221 (KKEDNQLFFC…LRSIFMEIFA (186 aa)). Residues 81–88 (RGGDITYH), 154–156 (AIG), and 167–169 (GFA) contribute to the substrate site. Cys-185 serves as the catalytic Acyl-thioester intermediate.

This sequence belongs to the LipB family.

The protein resides in the cytoplasm. The enzyme catalyses octanoyl-[ACP] + L-lysyl-[protein] = N(6)-octanoyl-L-lysyl-[protein] + holo-[ACP] + H(+). The protein operates within protein modification; protein lipoylation via endogenous pathway; protein N(6)-(lipoyl)lysine from octanoyl-[acyl-carrier-protein]: step 1/2. Catalyzes the transfer of endogenously produced octanoic acid from octanoyl-acyl-carrier-protein onto the lipoyl domains of lipoate-dependent enzymes. Lipoyl-ACP can also act as a substrate although octanoyl-ACP is likely to be the physiological substrate. The polypeptide is Octanoyltransferase (Parabacteroides distasonis (strain ATCC 8503 / DSM 20701 / CIP 104284 / JCM 5825 / NCTC 11152)).